Consider the following 576-residue polypeptide: Putative pentatricopeptide repeat-containing protein At5g47460 (576 aa).

PPR repeat units lie at residues 20-53, 54-88, 89-119, 120-154, 155-189, 191-225, 226-252, 253-287, 288-318, 319-353, 354-384, 385-419, 421-452, and 458-488; these read SSNS…GEKP, DASP…GFVS, NTRL…MPDP, DVIS…DVFP, NEFS…GLEK, NVVV…DTVS, WNAI…MPNP, DTVT…NSSS, WNTI…GVRF, DEYS…GLDS, RVVV…MPRK, NLIV…RFLK, DRFT…MINE, and SVEH…FGFG. A type E motif region spans residues 493-570; the sequence is AWRALLGACS…EVGSSWIDSR (78 aa).

The protein belongs to the PPR family. PCMP-E subfamily.

The sequence is that of Putative pentatricopeptide repeat-containing protein At5g47460 (PCMP-E103) from Arabidopsis thaliana (Mouse-ear cress).